Consider the following 225-residue polypeptide: Chromosome partition protein MukE (225 aa).

The segment at 197–225 (RDGEAMPIENHLQLNDETEENQPDSGEEE) is disordered. Acidic residues predominate over residues 212–225 (DETEENQPDSGEEE).

It belongs to the MukE family. Interacts, and probably forms a ternary complex, with MukF and MukB. The complex formation is stimulated by calcium or magnesium.

Its subcellular location is the cytoplasm. The protein resides in the nucleoid. Functionally, involved in chromosome condensation, segregation and cell cycle progression. May participate in facilitating chromosome segregation by condensation DNA from both sides of a centrally located replisome during cell division. Probably acts via its interaction with MukB and MukF. This Escherichia coli O157:H7 protein is Chromosome partition protein MukE.